Here is a 313-residue protein sequence, read N- to C-terminus: L-lactate dehydrogenase (313 aa).

NAD(+) is bound by residues Val-11, Asp-32, Arg-37, Tyr-62, and 76–77; that span reads GV. Substrate contacts are provided by residues Gln-79, Arg-85, and 117-120; that span reads NPVD. NAD(+) is bound by residues 115–117 and Ser-143; that span reads ASN. A substrate-binding site is contributed by 148–151; sequence DTAR. Beta-D-fructose 1,6-bisphosphate-binding residues include Arg-153 and His-168. His-175 functions as the Proton acceptor in the catalytic mechanism. The residue at position 221 (Tyr-221) is a Phosphotyrosine. Thr-230 contributes to the substrate binding site.

This sequence belongs to the LDH/MDH superfamily. LDH family. Homotetramer.

Its subcellular location is the cytoplasm. The enzyme catalyses (S)-lactate + NAD(+) = pyruvate + NADH + H(+). It functions in the pathway fermentation; pyruvate fermentation to lactate; (S)-lactate from pyruvate: step 1/1. Its activity is regulated as follows. Allosterically activated by fructose 1,6-bisphosphate (FBP). Its function is as follows. Catalyzes the conversion of lactate to pyruvate. The polypeptide is L-lactate dehydrogenase (Geotalea daltonii (strain DSM 22248 / JCM 15807 / FRC-32) (Geobacter daltonii)).